A 121-amino-acid polypeptide reads, in one-letter code: UPF0102 protein XF_0554 (121 aa).

This sequence belongs to the UPF0102 family.

This chain is UPF0102 protein XF_0554, found in Xylella fastidiosa (strain 9a5c).